A 37-amino-acid polypeptide reads, in one-letter code: Large ribosomal subunit protein bL36c (37 aa).

This sequence belongs to the bacterial ribosomal protein bL36 family.

Its subcellular location is the plastid. The protein resides in the chloroplast. This chain is Large ribosomal subunit protein bL36c, found in Physcomitrium patens (Spreading-leaved earth moss).